The primary structure comprises 147 residues: Interleukin-4 (147 aa).

Residues 1–24 form the signal peptide; the sequence is MGLSPHLAVTLFCFLICTGNGIHG. A disulfide bridge links Cys47 with Cys87. 3 N-linked (GlcNAc...) asparagine glycosylation sites follow: Asn61, Asn90, and Asn117.

Belongs to the IL-4/IL-13 family.

Its subcellular location is the secreted. In terms of biological role, participates in at least several B-cell activation processes as well as of other cell types. It is a costimulator of DNA-synthesis. It induces the expression of class II MHC molecules on resting B-cells. It enhances both secretion and cell surface expression of IgE and IgG1. It also regulates the expression of the low affinity Fc receptor for IgE (CD23) on both lymphocytes and monocytes. Positively regulates IL31RA expression in macrophages. Stimulates autophagy in dendritic cells by interfering with mTORC1 signaling and through the induction of RUFY4. This chain is Interleukin-4 (Il4), found in Rattus norvegicus (Rat).